A 318-amino-acid polypeptide reads, in one-letter code: Aspartate carbamoyltransferase catalytic subunit (318 aa).

Residues Arg59 and Thr60 each contribute to the carbamoyl phosphate site. An L-aspartate-binding site is contributed by Lys87. The carbamoyl phosphate site is built by Arg109, His137, and Gln140. Positions 170 and 224 each coordinate L-aspartate. The carbamoyl phosphate site is built by Gly265 and Pro266.

This sequence belongs to the aspartate/ornithine carbamoyltransferase superfamily. ATCase family. As to quaternary structure, heterododecamer (2C3:3R2) of six catalytic PyrB chains organized as two trimers (C3), and six regulatory PyrI chains organized as three dimers (R2).

The catalysed reaction is carbamoyl phosphate + L-aspartate = N-carbamoyl-L-aspartate + phosphate + H(+). It functions in the pathway pyrimidine metabolism; UMP biosynthesis via de novo pathway; (S)-dihydroorotate from bicarbonate: step 2/3. Catalyzes the condensation of carbamoyl phosphate and aspartate to form carbamoyl aspartate and inorganic phosphate, the committed step in the de novo pyrimidine nucleotide biosynthesis pathway. This is Aspartate carbamoyltransferase catalytic subunit from Rhizobium etli (strain ATCC 51251 / DSM 11541 / JCM 21823 / NBRC 15573 / CFN 42).